A 426-amino-acid polypeptide reads, in one-letter code: 3-phosphoshikimate 1-carboxyvinyltransferase (426 aa).

3 residues coordinate 3-phosphoshikimate: K20, S21, and R25. K20 serves as a coordination point for phosphoenolpyruvate. Phosphoenolpyruvate is bound by residues G92 and R120. Positions 166, 168, 312, and 339 each coordinate 3-phosphoshikimate. A phosphoenolpyruvate-binding site is contributed by Q168. D312 serves as the catalytic Proton acceptor. Residue R385 participates in phosphoenolpyruvate binding.

This sequence belongs to the EPSP synthase family. Monomer.

Its subcellular location is the cytoplasm. The enzyme catalyses 3-phosphoshikimate + phosphoenolpyruvate = 5-O-(1-carboxyvinyl)-3-phosphoshikimate + phosphate. It participates in metabolic intermediate biosynthesis; chorismate biosynthesis; chorismate from D-erythrose 4-phosphate and phosphoenolpyruvate: step 6/7. Catalyzes the transfer of the enolpyruvyl moiety of phosphoenolpyruvate (PEP) to the 5-hydroxyl of shikimate-3-phosphate (S3P) to produce enolpyruvyl shikimate-3-phosphate and inorganic phosphate. The chain is 3-phosphoshikimate 1-carboxyvinyltransferase from Streptococcus suis (strain 98HAH33).